The primary structure comprises 349 residues: DNA replication and repair protein RecF (349 aa).

Glycine 29–threonine 36 lines the ATP pocket.

Belongs to the RecF family.

It is found in the cytoplasm. In terms of biological role, the RecF protein is involved in DNA metabolism; it is required for DNA replication and normal SOS inducibility. RecF binds preferentially to single-stranded, linear DNA. It also seems to bind ATP. In Acholeplasma laidlawii (strain PG-8A), this protein is DNA replication and repair protein RecF.